A 491-amino-acid polypeptide reads, in one-letter code: MMVRIFDTTLRDGEQTPGVSLTPNDKLEIAKKLDELGVDVIEAGSAITSKGEREGIKLITKEGLNAEICSFVRALPVDIDAALECDVDSVHLVVPTSPIHMKYKLRKTEDEVLETALKAVEYAKEHGLIVELSAEDATRSDVNFLIKLFNEGEKVGADRVCVCDTVGVLTPQKSQELFKKITENVNLPVSVHCHNDFGMATANTCSAVLGGAVQCHVTVNGIGERAGNASLEEVVAALKILYGYDTKIKMEKLYEVSRIVSRLMKLPVPPNKAIVGDNAFAHEAGIHVDGLIKNTETYEPIKPEMVGNRRRIILGKHSGRKALKYKLDLMGINVSDEQLNKIYERVKEFGDLGKYISDADLLAIVREVTGKLVEEKIKLDELTVVSGNKITPIASVKLHYKGEDITLIETAYGVGPVDAAINAVRKAISGVADIKLVEYRVEAIGGGTDALIEVVVKLRKGTEIVEVRKSDADIIRASVDAVMEGINMLLN.

A Pyruvate carboxyltransferase domain is found at 3–254 (VRIFDTTLRD…DTKIKMEKLY (252 aa)).

This sequence belongs to the alpha-IPM synthase/homocitrate synthase family. Homodimer.

The enzyme catalyses pyruvate + acetyl-CoA + H2O = (3R)-citramalate + CoA + H(+). It functions in the pathway amino-acid biosynthesis; L-isoleucine biosynthesis; 2-oxobutanoate from pyruvate: step 1/3. Its function is as follows. Catalyzes the condensation of pyruvate and acetyl-coenzyme A to form (R)-citramalate. This is (R)-citramalate synthase CimA (cimA) from Methanocaldococcus jannaschii (strain ATCC 43067 / DSM 2661 / JAL-1 / JCM 10045 / NBRC 100440) (Methanococcus jannaschii).